The sequence spans 248 residues: MTRIFFNQQYPTLVDISQRWQLEFDKEAEFELKFEQNQLSLHKRDEPKLDGIVVDFISGAVAHRRKFGGGRGQSIAKAVGLKQGVTPTVVDGTAGLGRDAFVLASLGCKVIMVERHPVVAALLEDGLRRAYDDAEIGAWMTERMSLFPGSSLEALAKITDAVDVVYLDPMYPHRDKSALVKKEMRVFQSLVGADLDADGLLTPAMTLATKRVVVKRPDYAEDLDGIKPSMVIATKKNRFDVYIKAAMK.

S-adenosyl-L-methionine contacts are provided by residues 98-99 (RD), 114-115 (ER), 150-151 (SS), and Asp168.

The protein belongs to the methyltransferase superfamily. RsmJ family.

The protein localises to the cytoplasm. It catalyses the reaction guanosine(1516) in 16S rRNA + S-adenosyl-L-methionine = N(2)-methylguanosine(1516) in 16S rRNA + S-adenosyl-L-homocysteine + H(+). Functionally, specifically methylates the guanosine in position 1516 of 16S rRNA. The chain is Ribosomal RNA small subunit methyltransferase J from Shewanella denitrificans (strain OS217 / ATCC BAA-1090 / DSM 15013).